The primary structure comprises 203 residues: MTLTAGVVAVQGDVSEHAAAIRRAADAHGQPADVREIRTAGVVPECDVLLLPGGESTAISRLLDREGIDAEIRSHVAAGKPLLATCAGLIVSSTDANDDRVETLDVLDVTVDRNAFGRQVDSFEAPLDVDGLADPFPAVFIRAPVIDEVGADATVLASWDGRPVAIRDGPVVATSFHPELTADVRLHELAFFDRTPSAQAGDA.

54–56 is a binding site for L-glutamine; sequence GES. The active-site Nucleophile is the C86. Residues R113 and 141–142 each bind L-glutamine; that span reads IR. Active-site charge relay system residues include H177 and E179.

The protein belongs to the glutaminase PdxT/SNO family. In the presence of PdxS, forms a dodecamer of heterodimers. Only shows activity in the heterodimer.

It carries out the reaction aldehydo-D-ribose 5-phosphate + D-glyceraldehyde 3-phosphate + L-glutamine = pyridoxal 5'-phosphate + L-glutamate + phosphate + 3 H2O + H(+). The enzyme catalyses L-glutamine + H2O = L-glutamate + NH4(+). It participates in cofactor biosynthesis; pyridoxal 5'-phosphate biosynthesis. Its function is as follows. Catalyzes the hydrolysis of glutamine to glutamate and ammonia as part of the biosynthesis of pyridoxal 5'-phosphate. The resulting ammonia molecule is channeled to the active site of PdxS. The chain is Pyridoxal 5'-phosphate synthase subunit PdxT from Halobacterium salinarum (strain ATCC 29341 / DSM 671 / R1).